The primary structure comprises 525 residues: Probable protein kinase UbiB (525 aa).

The Protein kinase domain occupies 119–501 (RFDHHPVASA…QRRTNRLLSA (383 aa)). ATP-binding positions include 125–133 (VASASIAQV) and Lys-151. Catalysis depends on Asp-286, which acts as the Proton acceptor. A helical membrane pass occupies residues 502 to 522 (ALLFIGGFAVGIIATHVLAWL).

It belongs to the ABC1 family. UbiB subfamily.

The protein localises to the cell inner membrane. Its pathway is cofactor biosynthesis; ubiquinone biosynthesis [regulation]. Is probably a protein kinase regulator of UbiI activity which is involved in aerobic coenzyme Q (ubiquinone) biosynthesis. In Ralstonia nicotianae (strain ATCC BAA-1114 / GMI1000) (Ralstonia solanacearum), this protein is Probable protein kinase UbiB.